A 91-amino-acid polypeptide reads, in one-letter code: Acylphosphatase (91 aa).

The 87-residue stretch at 3-89 (TLLVRISGKV…PDQPGFSQKP (87 aa)) folds into the Acylphosphatase-like domain. Catalysis depends on residues Arg-18 and Asn-36.

Belongs to the acylphosphatase family.

It catalyses the reaction an acyl phosphate + H2O = a carboxylate + phosphate + H(+). In Rhodospirillum rubrum (strain ATCC 11170 / ATH 1.1.1 / DSM 467 / LMG 4362 / NCIMB 8255 / S1), this protein is Acylphosphatase (acyP).